The chain runs to 474 residues: Phenylalanine--tRNA ligase alpha subunit (474 aa).

L-phenylalanine-binding positions include threonine 317, 356 to 358 (QLE), and tyrosine 396. Glutamate 398 contributes to the Mg(2+) binding site. Phenylalanine 421 provides a ligand contact to L-phenylalanine.

It belongs to the class-II aminoacyl-tRNA synthetase family. Phe-tRNA synthetase alpha subunit type 2 subfamily. Tetramer of two alpha and two beta subunits. Mg(2+) is required as a cofactor.

It localises to the cytoplasm. It carries out the reaction tRNA(Phe) + L-phenylalanine + ATP = L-phenylalanyl-tRNA(Phe) + AMP + diphosphate + H(+). The sequence is that of Phenylalanine--tRNA ligase alpha subunit from Methanocorpusculum labreanum (strain ATCC 43576 / DSM 4855 / Z).